Reading from the N-terminus, the 117-residue chain is Large ribosomal subunit protein bL20 (117 aa).

It belongs to the bacterial ribosomal protein bL20 family.

Its function is as follows. Binds directly to 23S ribosomal RNA and is necessary for the in vitro assembly process of the 50S ribosomal subunit. It is not involved in the protein synthesizing functions of that subunit. This is Large ribosomal subunit protein bL20 from Leptospira borgpetersenii serovar Hardjo-bovis (strain JB197).